We begin with the raw amino-acid sequence, 241 residues long: 6-phosphogluconolactonase (241 aa).

It belongs to the glucosamine/galactosamine-6-phosphate isomerase family. 6-phosphogluconolactonase subfamily.

The catalysed reaction is 6-phospho-D-glucono-1,5-lactone + H2O = 6-phospho-D-gluconate + H(+). The protein operates within carbohydrate degradation; pentose phosphate pathway; D-ribulose 5-phosphate from D-glucose 6-phosphate (oxidative stage): step 2/3. In terms of biological role, hydrolysis of 6-phosphogluconolactone to 6-phosphogluconate. The chain is 6-phosphogluconolactonase (pgl) from Treponema pallidum (strain Nichols).